A 1034-amino-acid chain; its full sequence is Multidrug export protein AcrF (1034 aa).

Topologically, residues 1–9 (MANFFIRRP) are cytoplasmic. A helical membrane pass occupies residues 10–28 (IFAWVLAIILMMAGALAIL). Topologically, residues 29-339 (QLPVAQYPTI…TPFVQLSIHE (311 aa)) are periplasmic. Residues 340 to 359 (VVKTLFEAIMLVFLVMYLFL) traverse the membrane as a helical segment. The Cytoplasmic portion of the chain corresponds to 360 to 365 (QNMRAT). The helical transmembrane segment at 366 to 385 (LIPTIAVPVVLLGTFAILAA) threads the bilayer. Topologically, residues 386–391 (FGYSIN) are periplasmic. A helical transmembrane segment spans residues 392–413 (TLTMFGMVLAIGLLVDDAIVVV). Topologically, residues 414–441 (ENVERVMMEDKLPPKEATEKSMSQIQGA) are cytoplasmic. Residues 442–460 (LVGIAMVLSAVFIPMAFFG) traverse the membrane as a helical segment. The Periplasmic segment spans residues 461–473 (GSTGAIYRQFSIT). The helical transmembrane segment at 474–496 (IVSAMALSVLVALILTPALCATL) threads the bilayer. At 497–537 (LKPVSAEHHENKGGFFGWFNTTFDHSVNHYTNSVGKILGST) the chain is on the cytoplasmic side. The chain crosses the membrane as a helical span at residues 538 to 556 (GRYLLIYALIVAGMVVLFL). Residues 557-871 (RLPSSFLPEE…SYQERLSGNQ (315 aa)) are Periplasmic-facing. The chain crosses the membrane as a helical span at residues 872–891 (APALVAISFVVVFLCLAALY). Over 892–897 (ESWSIP) the chain is Cytoplasmic. A helical membrane pass occupies residues 898 to 917 (VSVMLVVPLGIVGVLLAATL). At 918 to 923 (FNQKND) the chain is on the periplasmic side. Residues 924-945 (VYFMVGLLTTIGLSAKNAILIV) form a helical membrane-spanning segment. Topologically, residues 946-973 (EFAKDLMEKEGKGVVEATLMAVRMRLRP) are cytoplasmic. A helical transmembrane segment spans residues 974–992 (ILMTSLAFILGVLPLAISN). Residues 993-1005 (GAGSGAQNAVGIG) are Periplasmic-facing. Residues 1006–1028 (VMGGMVSATLLAIFFVPVFFVVI) traverse the membrane as a helical segment. Topologically, residues 1029-1034 (RRCFKG) are cytoplasmic.

The protein belongs to the resistance-nodulation-cell division (RND) (TC 2.A.6) family. Part of the tripartite efflux system AcrEF-TolC, which is composed of an inner membrane transporter, AcrF, a periplasmic membrane fusion protein, AcrE, and an outer membrane component, TolC. The complex forms a large protein conduit and can translocate molecules across both the inner and outer membranes.

Its subcellular location is the cell inner membrane. Part of the tripartite efflux system AcrEF-TolC. Involved in the efflux of indole and organic solvents. The chain is Multidrug export protein AcrF (acrF) from Escherichia coli (strain K12).